The sequence spans 377 residues: Succinyl-diaminopimelate desuccinylase (377 aa).

His68 lines the Zn(2+) pocket. The active site involves Asp70. Residue Asp101 participates in Zn(2+) binding. Catalysis depends on Glu135, which acts as the Proton acceptor. The Zn(2+) site is built by Glu136, Glu164, and His350.

The protein belongs to the peptidase M20A family. DapE subfamily. In terms of assembly, homodimer. Requires Zn(2+) as cofactor. Co(2+) is required as a cofactor.

It carries out the reaction N-succinyl-(2S,6S)-2,6-diaminopimelate + H2O = (2S,6S)-2,6-diaminopimelate + succinate. Its pathway is amino-acid biosynthesis; L-lysine biosynthesis via DAP pathway; LL-2,6-diaminopimelate from (S)-tetrahydrodipicolinate (succinylase route): step 3/3. In terms of biological role, catalyzes the hydrolysis of N-succinyl-L,L-diaminopimelic acid (SDAP), forming succinate and LL-2,6-diaminopimelate (DAP), an intermediate involved in the bacterial biosynthesis of lysine and meso-diaminopimelic acid, an essential component of bacterial cell walls. This is Succinyl-diaminopimelate desuccinylase from Psychromonas ingrahamii (strain DSM 17664 / CCUG 51855 / 37).